The following is a 230-amino-acid chain: TorCAD operon transcriptional regulatory protein TorR (230 aa).

A Response regulatory domain is found at 4-117; the sequence is HIVIVEDEPV…ELVVRVKNLL (114 aa). Asp53 is modified (4-aspartylphosphate). A DNA-binding region (ompR/PhoB-type) is located at residues 132 to 227; it reads DNCYRFAGYC…QHGEGYFLAA (96 aa).

In terms of assembly, interacts with TorI. TorI binds to the effector domain of TorR. This interaction, which does not interfere with TorR DNA binding activity, probably prevents the recruitment of RNA polymerase to the torCAD promoter. Phosphorylated and dephosphorylated by TorS.

The protein resides in the cytoplasm. Its function is as follows. Member of the two-component regulatory system TorS/TorR involved in the anaerobic utilization of trimethylamine-N-oxide (TMAO). Phosphorylated TorR activates the transcription of the torCAD operon by binding to four decameric boxes located in the torCAD promoter. Box1, 2 and 4 contain the DNA sequence 5'-CTGTTCATAT-3' and box3 contains the DNA sequence 5'-CCGTTCATCC-3'. Phosphorylated as well as unphosphorylated TorR negatively regulates its own expression by binding to box1 and 2. The polypeptide is TorCAD operon transcriptional regulatory protein TorR (torR) (Escherichia coli (strain K12)).